Consider the following 315-residue polypeptide: HVA22-like protein h (315 aa).

Residues 148 to 315 form a disordered region; that stretch reads PKPKPKEKKQ…RKARSAGAPR (168 aa). The segment covering 173–190 has biased composition (polar residues); sequence ATSQAASSNPQVRLQSKK. Pro residues predominate over residues 234–248; that stretch reads PPGPPPPPPPPPPSP.

The protein belongs to the DP1 family.

In Arabidopsis thaliana (Mouse-ear cress), this protein is HVA22-like protein h (HVA22H).